The chain runs to 271 residues: Colicin-M (271 aa).

The TonB box motif lies at 2–9 (ETLTVHAP).

Functionally, colicins are polypeptide toxins produced by and active against E.coli and closely related bacteria. In terms of biological role, this is a calcium-requiring inhibitor for murein biosynthesis; it causes lysis of sensitive cells accompanied by murein degradation. The target site is possibly the cytoplasmic membrane. This chain is Colicin-M (cma), found in Escherichia coli.